We begin with the raw amino-acid sequence, 213 residues long: Pyrrolidone-carboxylate peptidase (213 aa).

Catalysis depends on residues Glu81, Cys144, and His166.

This sequence belongs to the peptidase C15 family. Homodimer.

Its subcellular location is the cytoplasm. The enzyme catalyses Release of an N-terminal pyroglutamyl group from a polypeptide, the second amino acid generally not being Pro.. Its function is as follows. Removes 5-oxoproline from various penultimate amino acid residues except L-proline. The chain is Pyrrolidone-carboxylate peptidase (pcp) from Pseudomonas fluorescens.